A 446-amino-acid polypeptide reads, in one-letter code: Actin-related protein 6 (446 aa).

Over residues 1 to 11 (MTGRGGAKKSR) the composition is skewed to basic residues. The interval 1–24 (MTGRGGAKKSRAAGPAPPTTTLVL) is disordered.

This sequence belongs to the actin family. ARP6 subfamily. Component of the SWR1 chromatin remodeling complex.

Its subcellular location is the cytoplasm. The protein localises to the cytoskeleton. The protein resides in the nucleus. Functionally, component of the SWR1 complex which mediates the ATP-dependent exchange of histone H2A for the H2A variant H2A.Z leading to transcriptional regulation of selected genes by chromatin remodeling. Involved in chromosome stability. The chain is Actin-related protein 6 (arp-6) from Neurospora crassa (strain ATCC 24698 / 74-OR23-1A / CBS 708.71 / DSM 1257 / FGSC 987).